The primary structure comprises 354 residues: Uroporphyrinogen decarboxylase (354 aa).

Substrate contacts are provided by residues 27 to 31, Asp-77, Tyr-154, Thr-209, and His-327; that span reads RQAGR.

Belongs to the uroporphyrinogen decarboxylase family. In terms of assembly, homodimer.

The protein localises to the cytoplasm. It carries out the reaction uroporphyrinogen III + 4 H(+) = coproporphyrinogen III + 4 CO2. It functions in the pathway porphyrin-containing compound metabolism; protoporphyrin-IX biosynthesis; coproporphyrinogen-III from 5-aminolevulinate: step 4/4. Its function is as follows. Catalyzes the decarboxylation of four acetate groups of uroporphyrinogen-III to yield coproporphyrinogen-III. This Salmonella agona (strain SL483) protein is Uroporphyrinogen decarboxylase.